A 346-amino-acid chain; its full sequence is GTP 3',8-cyclase (346 aa).

The region spanning 10–240 (QRSRPLRVLR…VTRIRARWPL (231 aa)) is the Radical SAM core domain. Arg19 is a binding site for GTP. Residues Cys26 and Cys30 each coordinate [4Fe-4S] cluster. Residue Tyr32 participates in S-adenosyl-L-methionine binding. Cys33 provides a ligand contact to [4Fe-4S] cluster. Arg65 lines the GTP pocket. Gly69 is a binding site for S-adenosyl-L-methionine. Residue Thr104 participates in GTP binding. Ser129 serves as a coordination point for S-adenosyl-L-methionine. Lys177 provides a ligand contact to GTP. An S-adenosyl-L-methionine-binding site is contributed by Met211. [4Fe-4S] cluster-binding residues include Cys274 and Cys277. 279–281 (RLR) is a binding site for GTP. A [4Fe-4S] cluster-binding site is contributed by Cys291. The segment at 326–346 (SDERQQTTGSMPHAEMAYLGG) is disordered.

Belongs to the radical SAM superfamily. MoaA family. In terms of assembly, monomer and homodimer. It depends on [4Fe-4S] cluster as a cofactor.

The catalysed reaction is GTP + AH2 + S-adenosyl-L-methionine = (8S)-3',8-cyclo-7,8-dihydroguanosine 5'-triphosphate + 5'-deoxyadenosine + L-methionine + A + H(+). It participates in cofactor biosynthesis; molybdopterin biosynthesis. Functionally, catalyzes the cyclization of GTP to (8S)-3',8-cyclo-7,8-dihydroguanosine 5'-triphosphate. This is GTP 3',8-cyclase from Parasynechococcus marenigrum (strain WH8102).